The sequence spans 119 residues: Large ribosomal subunit protein uL24 (119 aa).

It belongs to the universal ribosomal protein uL24 family. Part of the 50S ribosomal subunit.

In terms of biological role, one of two assembly initiator proteins, it binds directly to the 5'-end of the 23S rRNA, where it nucleates assembly of the 50S subunit. Located at the polypeptide exit tunnel on the outside of the subunit. The sequence is that of Large ribosomal subunit protein uL24 from Methanococcus maripaludis (strain C5 / ATCC BAA-1333).